The following is a 405-amino-acid chain: S-adenosylmethionine synthase (405 aa).

ATP is bound at residue histidine 22. Aspartate 24 contacts Mg(2+). Glutamate 50 lines the K(+) pocket. L-methionine-binding residues include glutamate 63 and glutamine 107. A flexible loop region spans residues 107–117; it reads QSPDIAQGVDR. ATP is bound by residues 184-186, 250-251, aspartate 259, 265-266, alanine 282, and lysine 286; these read DGK, RF, and RK. Aspartate 259 contributes to the L-methionine binding site. Lysine 290 provides a ligand contact to L-methionine.

Belongs to the AdoMet synthase family. As to quaternary structure, homotetramer; dimer of dimers. Requires Mg(2+) as cofactor. It depends on K(+) as a cofactor.

It localises to the cytoplasm. The enzyme catalyses L-methionine + ATP + H2O = S-adenosyl-L-methionine + phosphate + diphosphate. Its pathway is amino-acid biosynthesis; S-adenosyl-L-methionine biosynthesis; S-adenosyl-L-methionine from L-methionine: step 1/1. Catalyzes the formation of S-adenosylmethionine (AdoMet) from methionine and ATP. The overall synthetic reaction is composed of two sequential steps, AdoMet formation and the subsequent tripolyphosphate hydrolysis which occurs prior to release of AdoMet from the enzyme. In Roseiflexus sp. (strain RS-1), this protein is S-adenosylmethionine synthase.